Here is a 415-residue protein sequence, read N- to C-terminus: CCA-adding enzyme (415 aa).

ATP-binding residues include S52 and R55. 2 residues coordinate CTP: S52 and R55. D64, D66, and D116 together coordinate Mg(2+). The ATP site is built by H139, K159, and Y168. 3 residues coordinate CTP: H139, K159, and Y168.

It belongs to the tRNA nucleotidyltransferase/poly(A) polymerase family. Archaeal CCA-adding enzyme subfamily. In terms of assembly, homodimer. The cofactor is Mg(2+).

It carries out the reaction a tRNA precursor + 2 CTP + ATP = a tRNA with a 3' CCA end + 3 diphosphate. It catalyses the reaction a tRNA with a 3' CCA end + 2 CTP + ATP = a tRNA with a 3' CCACCA end + 3 diphosphate. Functionally, catalyzes the addition and repair of the essential 3'-terminal CCA sequence in tRNAs without using a nucleic acid template. Adds these three nucleotides in the order of C, C, and A to the tRNA nucleotide-73, using CTP and ATP as substrates and producing inorganic pyrophosphate. tRNA 3'-terminal CCA addition is required both for tRNA processing and repair. Also involved in tRNA surveillance by mediating tandem CCA addition to generate a CCACCA at the 3' terminus of unstable tRNAs. While stable tRNAs receive only 3'-terminal CCA, unstable tRNAs are marked with CCACCA and rapidly degraded. This is CCA-adding enzyme from Pyrobaculum neutrophilum (strain DSM 2338 / JCM 9278 / NBRC 100436 / V24Sta) (Thermoproteus neutrophilus).